The primary structure comprises 430 residues: Tol-Pal system protein TolB (430 aa).

An N-terminal signal peptide occupies residues 1-21 (MKQALRVAFGFLILWASVLHA).

Belongs to the TolB family. The Tol-Pal system is composed of five core proteins: the inner membrane proteins TolA, TolQ and TolR, the periplasmic protein TolB and the outer membrane protein Pal. They form a network linking the inner and outer membranes and the peptidoglycan layer.

Its subcellular location is the periplasm. Functionally, part of the Tol-Pal system, which plays a role in outer membrane invagination during cell division and is important for maintaining outer membrane integrity. TolB occupies a key intermediary position in the Tol-Pal system because it communicates directly with both membrane-embedded components, Pal in the outer membrane and TolA in the inner membrane. In Shigella dysenteriae serotype 1 (strain Sd197), this protein is Tol-Pal system protein TolB.